The chain runs to 130 residues: Large ribosomal subunit protein bL17 (130 aa).

The protein belongs to the bacterial ribosomal protein bL17 family. Part of the 50S ribosomal subunit. Contacts protein L32.

The chain is Large ribosomal subunit protein bL17 from Buchnera aphidicola subsp. Acyrthosiphon pisum (strain APS) (Acyrthosiphon pisum symbiotic bacterium).